Consider the following 467-residue polypeptide: ATP synthase subunit beta 1 (467 aa).

Residue 150 to 157 (GGAGVGKT) participates in ATP binding.

Belongs to the ATPase alpha/beta chains family. As to quaternary structure, F-type ATPases have 2 components, CF(1) - the catalytic core - and CF(0) - the membrane proton channel. CF(1) has five subunits: alpha(3), beta(3), gamma(1), delta(1), epsilon(1). CF(0) has three main subunits: a(1), b(2) and c(9-12). The alpha and beta chains form an alternating ring which encloses part of the gamma chain. CF(1) is attached to CF(0) by a central stalk formed by the gamma and epsilon chains, while a peripheral stalk is formed by the delta and b chains.

It localises to the cell inner membrane. The catalysed reaction is ATP + H2O + 4 H(+)(in) = ADP + phosphate + 5 H(+)(out). Its function is as follows. Produces ATP from ADP in the presence of a proton gradient across the membrane. The catalytic sites are hosted primarily by the beta subunits. The protein is ATP synthase subunit beta 1 of Vibrio campbellii (strain ATCC BAA-1116).